The following is a 168-amino-acid chain: 3-isopropylmalate dehydratase small subunit (168 aa).

This sequence belongs to the LeuD family. LeuD type 2 subfamily. In terms of assembly, heterodimer of LeuC and LeuD.

The enzyme catalyses (2R,3S)-3-isopropylmalate = (2S)-2-isopropylmalate. It participates in amino-acid biosynthesis; L-leucine biosynthesis; L-leucine from 3-methyl-2-oxobutanoate: step 2/4. Catalyzes the isomerization between 2-isopropylmalate and 3-isopropylmalate, via the formation of 2-isopropylmaleate. The polypeptide is 3-isopropylmalate dehydratase small subunit (leuD) (Aquifex aeolicus (strain VF5)).